The chain runs to 192 residues: Superoxide dismutase [Fe] (192 aa).

The Fe cation site is built by histidine 27, histidine 74, aspartate 157, and histidine 161.

The protein belongs to the iron/manganese superoxide dismutase family. In terms of assembly, homodimer. Fe cation is required as a cofactor.

The catalysed reaction is 2 superoxide + 2 H(+) = H2O2 + O2. Functionally, destroys superoxide anion radicals which are normally produced within the cells and which are toxic to biological systems. The chain is Superoxide dismutase [Fe] (sodB) from Legionella pneumophila subsp. pneumophila (strain Philadelphia 1 / ATCC 33152 / DSM 7513).